The following is a 385-amino-acid chain: 1-deoxy-D-xylulose 5-phosphate reductoisomerase (385 aa).

Positions 10, 11, 12, 13, 36, 38, and 121 each coordinate NADPH. Residue Lys122 participates in 1-deoxy-D-xylulose 5-phosphate binding. Glu123 serves as a coordination point for NADPH. Residue Asp147 coordinates Mn(2+). 1-deoxy-D-xylulose 5-phosphate contacts are provided by Ser148, Glu149, Ser173, and His196. Glu149 provides a ligand contact to Mn(2+). Residue Gly202 coordinates NADPH. 1-deoxy-D-xylulose 5-phosphate is bound by residues Ser209, Asn214, Lys215, and Glu218. Glu218 lines the Mn(2+) pocket.

It belongs to the DXR family. It depends on Mg(2+) as a cofactor. Mn(2+) serves as cofactor.

It catalyses the reaction 2-C-methyl-D-erythritol 4-phosphate + NADP(+) = 1-deoxy-D-xylulose 5-phosphate + NADPH + H(+). The protein operates within isoprenoid biosynthesis; isopentenyl diphosphate biosynthesis via DXP pathway; isopentenyl diphosphate from 1-deoxy-D-xylulose 5-phosphate: step 1/6. In terms of biological role, catalyzes the NADPH-dependent rearrangement and reduction of 1-deoxy-D-xylulose-5-phosphate (DXP) to 2-C-methyl-D-erythritol 4-phosphate (MEP). The sequence is that of 1-deoxy-D-xylulose 5-phosphate reductoisomerase from Exiguobacterium sp. (strain ATCC BAA-1283 / AT1b).